The primary structure comprises 307 residues: Probable GTP 3',8-cyclase (307 aa).

In terms of domain architecture, Radical SAM core spans 4 to 222; sequence ALGREVRSVR…RTFHSREVYR (219 aa). Arginine 13 provides a ligand contact to GTP. 2 residues coordinate [4Fe-4S] cluster: cysteine 20 and cysteine 24. Tyrosine 26 provides a ligand contact to S-adenosyl-L-methionine. Cysteine 27 is a binding site for [4Fe-4S] cluster. GTP is bound at residue lysine 60. Residues glycine 64 and serine 112 each contribute to the S-adenosyl-L-methionine site. Position 150 (lysine 150) interacts with GTP. 2 residues coordinate [4Fe-4S] cluster: cysteine 240 and cysteine 243. 245-247 is a binding site for GTP; it reads RIR. Cysteine 257 lines the [4Fe-4S] cluster pocket.

The protein belongs to the radical SAM superfamily. MoaA family. The cofactor is [4Fe-4S] cluster.

The catalysed reaction is GTP + AH2 + S-adenosyl-L-methionine = (8S)-3',8-cyclo-7,8-dihydroguanosine 5'-triphosphate + 5'-deoxyadenosine + L-methionine + A + H(+). The protein operates within cofactor biosynthesis; molybdopterin biosynthesis. Its function is as follows. Catalyzes the cyclization of GTP to (8S)-3',8-cyclo-7,8-dihydroguanosine 5'-triphosphate. In Methanopyrus kandleri (strain AV19 / DSM 6324 / JCM 9639 / NBRC 100938), this protein is Probable GTP 3',8-cyclase.